A 114-amino-acid polypeptide reads, in one-letter code: T cell receptor beta variable 4-3 (114 aa).

The signal sequence occupies residues 1–21 (MGCRLLCCAVLCLLGAVPMET). Residues 22 to 114 (GVTQTPRHLV…SALYLCASSQ (93 aa)) enclose the Ig-like domain. A disulfide bond links cysteine 42 and cysteine 110. 2 N-linked (GlcNAc...) asparagine glycosylation sites follow: asparagine 76 and asparagine 89.

As to quaternary structure, alpha-beta TR is a heterodimer composed of an alpha and beta chain; disulfide-linked. The alpha-beta TR is associated with the transmembrane signaling CD3 coreceptor proteins to form the TR-CD3 (TcR or TCR). The assembly of alpha-beta TR heterodimers with CD3 occurs in the endoplasmic reticulum where a single alpha-beta TR heterodimer associates with one CD3D-CD3E heterodimer, one CD3G-CD3E heterodimer and one CD247 homodimer forming a stable octameric structure. CD3D-CD3E and CD3G-CD3E heterodimers preferentially associate with TR alpha and TR beta chains, respectively. The association of the CD247 homodimer is the last step of TcR assembly in the endoplasmic reticulum and is required for transport to the cell surface.

It is found in the cell membrane. Functionally, v region of the variable domain of T cell receptor (TR) beta chain that participates in the antigen recognition. Alpha-beta T cell receptors are antigen specific receptors which are essential to the immune response and are present on the cell surface of T lymphocytes. Recognize peptide-major histocompatibility (MH) (pMH) complexes that are displayed by antigen presenting cells (APC), a prerequisite for efficient T cell adaptive immunity against pathogens. Binding of alpha-beta TR to pMH complex initiates TR-CD3 clustering on the cell surface and intracellular activation of LCK that phosphorylates the ITAM motifs of CD3G, CD3D, CD3E and CD247 enabling the recruitment of ZAP70. In turn ZAP70 phosphorylates LAT, which recruits numerous signaling molecules to form the LAT signalosome. The LAT signalosome propagates signal branching to three major signaling pathways, the calcium, the mitogen-activated protein kinase (MAPK) kinase and the nuclear factor NF-kappa-B (NF-kB) pathways, leading to the mobilization of transcription factors that are critical for gene expression and essential for T cell growth and differentiation. The T cell repertoire is generated in the thymus, by V-(D)-J rearrangement. This repertoire is then shaped by intrathymic selection events to generate a peripheral T cell pool of self-MH restricted, non-autoaggressive T cells. Post-thymic interaction of alpha-beta TR with the pMH complexes shapes TR structural and functional avidity. The sequence is that of T cell receptor beta variable 4-3 from Homo sapiens (Human).